We begin with the raw amino-acid sequence, 453 residues long: uncharacterized protein (453 aa).

[4Fe-4S] cluster contacts are provided by Cys74, Cys80, Cys83, and Cys162. Gln286, Tyr315, Glu336, and Asp384 together coordinate S-adenosyl-L-methionine. Cys411 serves as the catalytic Nucleophile.

It belongs to the class I-like SAM-binding methyltransferase superfamily. RNA M5U methyltransferase family.

This is an uncharacterized protein from Staphylococcus aureus (strain COL).